The following is a 465-amino-acid chain: Ribulose bisphosphate carboxylase large chain (465 aa).

An N6,N6,N6-trimethyllysine modification is found at Lys-4. Substrate contacts are provided by Asn-113 and Thr-163. Residue Lys-165 is the Proton acceptor of the active site. Residue Lys-167 participates in substrate binding. Mg(2+)-binding residues include Lys-191, Asp-193, and Glu-194. At Lys-191 the chain carries N6-carboxylysine. The Proton acceptor role is filled by His-284. Arg-285, His-317, and Ser-369 together coordinate substrate.

It belongs to the RuBisCO large chain family. Type I subfamily. In terms of assembly, heterohexadecamer of 8 large chains and 8 small chains; disulfide-linked. The disulfide link is formed within the large subunit homodimers. Mg(2+) serves as cofactor. In terms of processing, the disulfide bond which can form in the large chain dimeric partners within the hexadecamer appears to be associated with oxidative stress and protein turnover.

The protein localises to the plastid. The protein resides in the chloroplast. The enzyme catalyses 2 (2R)-3-phosphoglycerate + 2 H(+) = D-ribulose 1,5-bisphosphate + CO2 + H2O. It catalyses the reaction D-ribulose 1,5-bisphosphate + O2 = 2-phosphoglycolate + (2R)-3-phosphoglycerate + 2 H(+). Its function is as follows. RuBisCO catalyzes two reactions: the carboxylation of D-ribulose 1,5-bisphosphate, the primary event in carbon dioxide fixation, as well as the oxidative fragmentation of the pentose substrate in the photorespiration process. Both reactions occur simultaneously and in competition at the same active site. This is Ribulose bisphosphate carboxylase large chain from Senega cruciata (Cross-leaved milkwort).